The following is a 412-amino-acid chain: Lysosomal phospholipase A and acyltransferase (412 aa).

The signal sequence occupies residues 1–33; the sequence is MDRHLCTCRETQLRSGLLLPLFLLMMLADLTLP. Substrate is bound at residue Asp-46. An intrachain disulfide couples Cys-65 to Cys-89. The N-linked (GlcNAc...) asparagine glycan is linked to Asn-99. Ser-198 functions as the Acyl-ester intermediate in the catalytic mechanism. Position 198 (Ser-198) interacts with Zn(2+). Met-199 is a binding site for substrate. Asn-273 and Asn-289 each carry an N-linked (GlcNAc...) asparagine glycan. Residue Cys-355 participates in Zn(2+) binding. Catalysis depends on charge relay system residues Asp-360 and His-392. Residue His-392 participates in Zn(2+) binding. Asn-398 is a glycosylation site (N-linked (GlcNAc...) asparagine).

The protein belongs to the AB hydrolase superfamily. Lipase family. In terms of processing, N-glycosylated. N-glycosylation is important for maturation of the enzyme and normal subcellular location. As to expression, detected in blood plasma. Detected in alveolar macrophages (at protein level). Detected in heart, liver, spleen, kidney, thymus, brain and lung.

The protein resides in the secreted. Its subcellular location is the lysosome. The protein localises to the membrane. It catalyses the reaction a 1,2-diacyl-sn-glycero-3-phosphocholine + H2O = a 2-acyl-sn-glycero-3-phosphocholine + a fatty acid + H(+). The catalysed reaction is 1-hexadecanoyl-2-(9Z-octadecenoyl)-sn-glycero-3-phosphocholine + H2O = 2-(9Z-octadecenoyl)-sn-glycero-3-phosphocholine + hexadecanoate + H(+). The enzyme catalyses 1,2-di-(9Z-octadecenoyl)-sn-glycero-3-phosphocholine + H2O = 2-(9Z-octadecenoyl)-sn-glycero-3-phosphocholine + (9Z)-octadecenoate + H(+). It carries out the reaction 1-hexadecanoyl-2-glutaroyl-sn-glycero-3-phosphocholine + H2O = 2-glutaroyl-sn-glycero-3-phosphocholine + hexadecanoate + H(+). It catalyses the reaction 1-hexadecanoyl-2-nonadioyl-sn-glycero-3-phosphocholine + H2O = 2-nonadioyl-sn-glycero-3-phosphocholine + hexadecanoate + H(+). The catalysed reaction is 1-hexadecanoyl-2-(5-oxopentanoyl)-sn-glycero-3-phosphocholine + H2O = 2-(5-oxopentanoyl)-sn-glycero-3-phosphocholine + hexadecanoate + H(+). The enzyme catalyses 1-hexadecanoyl-2-(9-oxononanoyl)-sn-glycero-3-phosphocholine + H2O = 2-(9-oxononanoyl)-sn-glycero-3-phosphocholine + hexadecanoate + H(+). It carries out the reaction 1,2-dihexadecanoyl-sn-glycero-3-phosphocholine + H2O = 2-hexadecanoyl-sn-glycero-3-phosphocholine + hexadecanoate + H(+). It catalyses the reaction a 1,2-diacyl-sn-glycero-3-phosphocholine + H2O = a 1-acyl-sn-glycero-3-phosphocholine + a fatty acid + H(+). The catalysed reaction is 1-hexadecanoyl-2-(9Z-octadecenoyl)-sn-glycero-3-phosphocholine + H2O = 1-hexadecanoyl-sn-glycero-3-phosphocholine + (9Z)-octadecenoate + H(+). The enzyme catalyses 1,2-di-(9Z-octadecenoyl)-sn-glycero-3-phosphocholine + H2O = 1-(9Z-octadecenoyl)-sn-glycero-3-phosphocholine + (9Z)-octadecenoate + H(+). It carries out the reaction 1,2-dihexadecanoyl-sn-glycero-3-phosphocholine + H2O = 1-hexadecanoyl-sn-glycero-3-phosphocholine + hexadecanoate + H(+). It catalyses the reaction a 1-acyl-sn-glycero-3-phosphocholine + H2O = sn-glycerol 3-phosphocholine + a fatty acid + H(+). The catalysed reaction is 1-hexadecanoyl-sn-glycero-3-phosphocholine + H2O = sn-glycerol 3-phosphocholine + hexadecanoate + H(+). The enzyme catalyses N-(acetyl)-sphing-4-enine + a 1,2-diacyl-sn-glycero-3-phosphoethanolamine = 1-O-acyl-N-(acetyl)-sphing-4-enine + a 2-acyl-sn-glycero-3-phosphoethanolamine. It carries out the reaction 1-hexadecanoyl-2-(9Z-octadecenoyl)-sn-glycero-3-phosphoethanolamine + N-(acetyl)-sphing-4-enine = 2-(9Z-octadecenoyl)-sn-glycero-3-phosphoethanolamine + 1-hexadecanoyl-N-(acetyl)-sphing-4-enine. It catalyses the reaction 1-hexadecanoyl-2-(9Z,12Z-octadecadienoyl)-sn-glycero-3-phosphoethanolamine + N-(acetyl)-sphing-4-enine = 2-(9Z,12Z)-octadecadienoyl-sn-glycero-3-phosphoethanolamine + 1-hexadecanoyl-N-(acetyl)-sphing-4-enine. The catalysed reaction is 1-hexadecanoyl-2-(5Z,8Z,11Z,14Z-eicosatetraenoyl)-sn-glycero-3-phosphoethanolamine + N-(acetyl)-sphing-4-enine = 2-(5Z,8Z,11Z,14Z)-eicosatetraenoyl-sn-glycero-3-phosphoethanolamine + 1-hexadecanoyl-N-(acetyl)-sphing-4-enine. The enzyme catalyses N-(acetyl)-sphing-4-enine + a 1,2-diacyl-sn-glycero-3-phosphoethanolamine = 1-O-acyl-N-(acetyl)-sphing-4-enine + a 1-acyl-sn-glycero-3-phosphoethanolamine. It carries out the reaction 1-hexadecanoyl-2-(9Z-octadecenoyl)-sn-glycero-3-phosphoethanolamine + N-(acetyl)-sphing-4-enine = 1-(9Z-octadecenoyl)-N-(acetyl)-sphing-4-enine + 1-hexadecanoyl-sn-glycero-3-phosphoethanolamine. It catalyses the reaction 1-hexadecanoyl-2-(9Z,12Z-octadecadienoyl)-sn-glycero-3-phosphoethanolamine + N-(acetyl)-sphing-4-enine = 1-(9Z,12Z-octadecadienoyl)-N-acetylsphing-4-enine + 1-hexadecanoyl-sn-glycero-3-phosphoethanolamine. The catalysed reaction is 1-hexadecanoyl-2-(5Z,8Z,11Z,14Z-eicosatetraenoyl)-sn-glycero-3-phosphoethanolamine + N-(acetyl)-sphing-4-enine = 1-(5Z,8Z,11Z,14Z)-eicosatetraenoyl-N-(acetyl)-sphing-4-enine + 1-hexadecanoyl-sn-glycero-3-phosphoethanolamine. The enzyme catalyses N-(acetyl)-sphing-4-enine + a 1,2-diacyl-sn-glycero-3-phosphocholine = 1-O-acyl-N-(acetyl)-sphing-4-enine + a 2-acyl-sn-glycero-3-phosphocholine. It carries out the reaction 1-hexadecanoyl-2-(9Z-octadecenoyl)-sn-glycero-3-phosphocholine + N-(acetyl)-sphing-4-enine = 1-hexadecanoyl-N-(acetyl)-sphing-4-enine + 2-(9Z-octadecenoyl)-sn-glycero-3-phosphocholine. It catalyses the reaction 1-hexadecanoyl-2-(9Z,12Z-octadecadienoyl)-sn-glycero-3-phosphocholine + N-(acetyl)-sphing-4-enine = 2-(9Z,12Z-octadecadienoyl)-sn-glycero-3-phosphocholine + 1-hexadecanoyl-N-(acetyl)-sphing-4-enine. The catalysed reaction is 1-hexadecanoyl-2-(5Z,8Z,11Z,14Z-eicosatetraenoyl)-sn-glycero-3-phosphocholine + N-(acetyl)-sphing-4-enine = 1-hexadecanoyl-N-(acetyl)-sphing-4-enine + 2-(5Z,8Z,11Z,14Z)-eicosatetraenoyl-sn-glycero-3-phosphocholine. The enzyme catalyses 1-hexadecanoyl-2-(4Z,7Z,10Z,13Z,16Z,19Z-docosahexaenoyl)-sn-glycero-3-phosphocholine + N-(acetyl)-sphing-4-enine = 2-(4Z,7Z,10Z,13Z,16Z,19Z-docosahexaenoyl)-sn-glycero-3-phosphocholine + 1-hexadecanoyl-N-(acetyl)-sphing-4-enine. It carries out the reaction 1-hexadecanoyl-2-nonadioyl-sn-glycero-3-phosphocholine + N-(acetyl)-sphing-4-enine = 2-nonadioyl-sn-glycero-3-phosphocholine + 1-hexadecanoyl-N-(acetyl)-sphing-4-enine. It catalyses the reaction 1-octadecanoyl-2-(9Z-octadecenoyl)-sn-glycero-3-phosphocholine + N-(acetyl)-sphing-4-enine = 1-octadecanoyl-N-(acetyl)-sphing-4-enine + 2-(9Z-octadecenoyl)-sn-glycero-3-phosphocholine. The catalysed reaction is 1-(9Z)-octadecenoyl-2-octadecanoyl-sn-glycero-3-phosphocholine + N-(acetyl)-sphing-4-enine = 2-octadecanoyl-sn-glycero-3-phosphocholine + 1-(9Z-octadecenoyl)-N-(acetyl)-sphing-4-enine. The enzyme catalyses 1-octadecanoyl-2-(5Z,8Z,11Z,14Z-eicosatetraenoyl)-sn-glycero-3-phosphocholine + N-(acetyl)-sphing-4-enine = 1-octadecanoyl-N-(acetyl)-sphing-4-enine + 2-(5Z,8Z,11Z,14Z)-eicosatetraenoyl-sn-glycero-3-phosphocholine. It carries out the reaction 1-(9Z-octadecenoyl)-2-hexadecanoyl-sn-glycero-3-phosphocholine + N-(acetyl)-sphing-4-enine = 1-(9Z-octadecenoyl)-N-(acetyl)-sphing-4-enine + 2-hexadecanoyl-sn-glycero-3-phosphocholine. It catalyses the reaction N-(acetyl)-sphing-4-enine + a 1,2-diacyl-sn-glycero-3-phosphocholine = 1-O-acyl-N-(acetyl)-sphing-4-enine + a 1-acyl-sn-glycero-3-phosphocholine. The catalysed reaction is 1-hexadecanoyl-2-(9Z-octadecenoyl)-sn-glycero-3-phosphocholine + N-(acetyl)-sphing-4-enine = 1-(9Z-octadecenoyl)-N-(acetyl)-sphing-4-enine + 1-hexadecanoyl-sn-glycero-3-phosphocholine. The enzyme catalyses 1-hexadecanoyl-2-(9Z,12Z-octadecadienoyl)-sn-glycero-3-phosphocholine + N-(acetyl)-sphing-4-enine = 1-(9Z,12Z-octadecadienoyl)-N-acetylsphing-4-enine + 1-hexadecanoyl-sn-glycero-3-phosphocholine. It carries out the reaction 1-hexadecanoyl-2-(5Z,8Z,11Z,14Z-eicosatetraenoyl)-sn-glycero-3-phosphocholine + N-(acetyl)-sphing-4-enine = 1-(5Z,8Z,11Z,14Z)-eicosatetraenoyl-N-(acetyl)-sphing-4-enine + 1-hexadecanoyl-sn-glycero-3-phosphocholine. It catalyses the reaction 1-hexadecanoyl-2-(4Z,7Z,10Z,13Z,16Z,19Z-docosahexaenoyl)-sn-glycero-3-phosphocholine + N-(acetyl)-sphing-4-enine = 1-(4Z,7Z,10Z,13Z,16Z,19Z-docosahexaenoyl)-N-(acetyl)-sphing-4-enine + 1-hexadecanoyl-sn-glycero-3-phosphocholine. The catalysed reaction is 1-octadecanoyl-2-(9Z-octadecenoyl)-sn-glycero-3-phosphocholine + N-(acetyl)-sphing-4-enine = 1-(9Z-octadecenoyl)-N-(acetyl)-sphing-4-enine + 1-octadecanoyl-sn-glycero-3-phosphocholine. The enzyme catalyses 1-octadecanoyl-2-(9Z,12Z)-octadecadienoyl-sn-glycero-3-phosphocholine + N-(acetyl)-sphing-4-enine = 1-(9Z,12Z-octadecadienoyl)-N-acetylsphing-4-enine + 1-octadecanoyl-sn-glycero-3-phosphocholine. It carries out the reaction 1-(9Z-octadecenoyl)-2-hexadecanoyl-sn-glycero-3-phosphocholine + N-(acetyl)-sphing-4-enine = 1-hexadecanoyl-N-(acetyl)-sphing-4-enine + 1-(9Z-octadecenoyl)-sn-glycero-3-phosphocholine. It catalyses the reaction 1-(9Z)-octadecenoyl-2-octadecanoyl-sn-glycero-3-phosphocholine + N-(acetyl)-sphing-4-enine = 1-octadecanoyl-N-(acetyl)-sphing-4-enine + 1-(9Z-octadecenoyl)-sn-glycero-3-phosphocholine. The catalysed reaction is 1,2-di-(9Z-octadecenoyl)-sn-glycero-3-phosphocholine + N-(acetyl)-sphing-4-enine = 1-(9Z-octadecenoyl)-N-(acetyl)-sphing-4-enine + 1-(9Z-octadecenoyl)-sn-glycero-3-phosphocholine. The enzyme catalyses 1-octadecanoyl-2-(5Z,8Z,11Z,14Z-eicosatetraenoyl)-sn-glycero-3-phosphocholine + N-(acetyl)-sphing-4-enine = 1-(5Z,8Z,11Z,14Z)-eicosatetraenoyl-N-(acetyl)-sphing-4-enine + 1-octadecanoyl-sn-glycero-3-phosphocholine. It carries out the reaction a 1,2-diacyl-sn-glycero-3-phospho-L-serine + N-(acetyl)-sphing-4-enine = a 2-acyl-sn-glycero-3-phospho-L-serine + 1-O-acyl-N-(acetyl)-sphing-4-enine. It catalyses the reaction 1-octadecanoyl-2-(9Z-octadecenoyl)-sn-glycero-3-phospho-L-serine + N-(acetyl)-sphing-4-enine = 2-(9Z-octadecenoyl)-sn-glycero-3-phospho-L-serine + 1-octadecanoyl-N-(acetyl)-sphing-4-enine. The catalysed reaction is a 1,2-diacyl-sn-glycero-3-phospho-L-serine + N-(acetyl)-sphing-4-enine = 1-O-acyl-N-(acetyl)-sphing-4-enine + a 1-acyl-sn-glycero-3-phospho-L-serine. The enzyme catalyses 1-octadecanoyl-2-(9Z-octadecenoyl)-sn-glycero-3-phospho-L-serine + N-(acetyl)-sphing-4-enine = 1-octadecanoyl-sn-glycero-3-phosphoserine + 1-(9Z-octadecenoyl)-N-(acetyl)-sphing-4-enine. It carries out the reaction a 1,2-diacyl-sn-glycero-3-phospho-(1'-sn-glycerol) + N-(acetyl)-sphing-4-enine = 2-acyl-sn-glycero-3-phospho-(1'-sn-glycerol) + 1-O-acyl-N-(acetyl)-sphing-4-enine. It catalyses the reaction 1-octadecanoyl-2-(9Z-octadecenoyl)-sn-glycero-3-phospho-(1'-sn-glycerol) + N-(acetyl)-sphing-4-enine = 2-(9Z-octadecenoyl)-sn-glycero-3-phospho-(1'-sn-glycerol) + 1-octadecanoyl-N-(acetyl)-sphing-4-enine. The catalysed reaction is a 1,2-diacyl-sn-glycero-3-phospho-(1'-sn-glycerol) + N-(acetyl)-sphing-4-enine = 1-O-acyl-N-(acetyl)-sphing-4-enine + 1-acyl-sn-glycero-3-phospho-(1'-sn-glycerol). The enzyme catalyses 1-octadecanoyl-2-(9Z-octadecenoyl)-sn-glycero-3-phospho-(1'-sn-glycerol) + N-(acetyl)-sphing-4-enine = 1-octadecanoyl-sn-glycero-3-phospho-(1'-sn-glycerol) + 1-(9Z-octadecenoyl)-N-(acetyl)-sphing-4-enine. It carries out the reaction an N-acylethanolamine + a 1,2-diacyl-sn-glycero-3-phosphocholine = 2-(acylamino)ethyl fatty acid + a 2-acyl-sn-glycero-3-phosphocholine. It catalyses the reaction an N-acylethanolamine + a 1,2-diacyl-sn-glycero-3-phosphocholine = 2-(acylamino)ethyl fatty acid + a 1-acyl-sn-glycero-3-phosphocholine. The catalysed reaction is N-(5Z,8Z,11Z,14Z-eicosatetraenoyl)-ethanolamine + 1,2-di-(9Z-octadecenoyl)-sn-glycero-3-phosphocholine = 2-[(5Z,8Z,11Z,14Z)-eicosatetraenoylamino]ethyl (9Z)-octadecenoate + (9Z-octadecenoyl)-sn-glycero-3-phosphocholine. The enzyme catalyses N-(9Z-octadecenoyl) ethanolamine + 1,2-di-(9Z-octadecenoyl)-sn-glycero-3-phosphocholine = 2-[(9Z)-octadecenoylamino]ethyl (9Z)-octadecenoate + (9Z-octadecenoyl)-sn-glycero-3-phosphocholine. It carries out the reaction a 3-acyl-sn-glycerol + a 1,2-diacyl-sn-glycero-3-phosphocholine = a 1,3-diacylglycerol + a 1-acyl-sn-glycero-3-phosphocholine. It catalyses the reaction a 3-acyl-sn-glycerol + a 1,2-diacyl-sn-glycero-3-phosphocholine = a 1,3-diacylglycerol + a 2-acyl-sn-glycero-3-phosphocholine. The catalysed reaction is 3-(9Z-octadecenoyl)-sn-glycerol + 1,2-di-(9Z-octadecenoyl)-sn-glycero-3-phosphocholine = 1,3-di-(9Z-octadecenoyl)-glycerol + (9Z-octadecenoyl)-sn-glycero-3-phosphocholine. The enzyme catalyses 3-hexadecanoyl-sn-glycerol + 1,2-di-(9Z-octadecenoyl)-sn-glycero-3-phosphocholine = 1-(9Z)-octadecenoyl-3-hexadecanoyl-sn-glycerol + (9Z-octadecenoyl)-sn-glycero-3-phosphocholine. It carries out the reaction a 1-acyl-sn-glycerol + a 1,2-diacyl-sn-glycero-3-phosphocholine = a 1,3-diacylglycerol + a 2-acyl-sn-glycero-3-phosphocholine. It catalyses the reaction a 1-acyl-sn-glycerol + a 1,2-diacyl-sn-glycero-3-phosphocholine = a 1,3-diacylglycerol + a 1-acyl-sn-glycero-3-phosphocholine. The catalysed reaction is 1-(9Z-octadecenoyl)-sn-glycerol + 1,2-di-(9Z-octadecenoyl)-sn-glycero-3-phosphocholine = 1,3-di-(9Z-octadecenoyl)-glycerol + (9Z-octadecenoyl)-sn-glycero-3-phosphocholine. The enzyme catalyses 1-hexadecanoyl-sn-glycerol + 1,2-di-(9Z-octadecenoyl)-sn-glycero-3-phosphocholine = 1-hexadecanoyl-3-(9Z)-octadecenoyl-sn-glycerol + (9Z-octadecenoyl)-sn-glycero-3-phosphocholine. It carries out the reaction a 2-acylglycerol + a 1,2-diacyl-sn-glycero-3-phosphocholine = a 1,2-diacylglycerol + a 2-acyl-sn-glycero-3-phosphocholine. It catalyses the reaction a 2-acylglycerol + a 1,2-diacyl-sn-glycero-3-phosphocholine = a 1,2-diacylglycerol + a 1-acyl-sn-glycero-3-phosphocholine. The catalysed reaction is 2-hexadecanoylglycerol + 1,2-di-(9Z-octadecenoyl)-sn-glycero-3-phosphocholine = 1-(9Z)-octadecenoyl-2-hexadecanoylglycerol + (9Z-octadecenoyl)-sn-glycero-3-phosphocholine. The enzyme catalyses 1-O-alkylglycerol + a 1,2-diacyl-sn-glycero-3-phosphocholine = 1-O-alkyl-3-acylglycerol + a 1-acyl-sn-glycero-3-phosphocholine. It carries out the reaction 1-O-alkylglycerol + a 1,2-diacyl-sn-glycero-3-phosphocholine = 1-O-alkyl-3-acylglycerol + a 2-acyl-sn-glycero-3-phosphocholine. It catalyses the reaction 1-O-hexadecylglycerol + 1,2-di-(9Z-octadecenoyl)-sn-glycero-3-phosphocholine = 1-O-hexadecyl-3-(9Z)-octadecenoylglycerol + (9Z-octadecenoyl)-sn-glycero-3-phosphocholine. The catalysed reaction is 1-O-alkyl-2-acyl-sn-glycerol + a 1,2-diacyl-sn-glycero-3-phosphocholine = 1-O-alkyl-2,3-diacyl-sn-glycerol + a 2-acyl-sn-glycero-3-phosphocholine. The enzyme catalyses 1-O-alkyl-2-acyl-sn-glycerol + a 1,2-diacyl-sn-glycero-3-phosphocholine = 1-O-alkyl-2,3-diacyl-sn-glycerol + a 1-acyl-sn-glycero-3-phosphocholine. It carries out the reaction 1-O-hexadecyl-2-acetyl-sn-glycerol + 1,2-di-(9Z-octadecenoyl)-sn-glycero-3-phosphocholine = 1-O-hexadecyl-2-acetyl-3-(9Z)-octadecenoyl-sn-glycerol + (9Z-octadecenoyl)-sn-glycero-3-phosphocholine. It catalyses the reaction 1-O-hexadecyl-2-O-methyl-sn-glycerol + 1,2-di-(9Z-octadecenoyl)-sn-glycero-3-phosphocholine = 1-O-hexadecyl-2-O-methyl-3-(9Z)-octadecenoyl-sn-glycerol + (9Z-octadecenoyl)-sn-glycero-3-phosphocholine. The catalysed reaction is a 1,2-diacyl-sn-glycero-3-phosphoethanolamine + H2O = a 1-acyl-sn-glycero-3-phosphoethanolamine + a fatty acid + H(+). The enzyme catalyses 1-acyl-2-(5Z,8Z,11Z,14Z)-eicosatetraenoyl-sn-glycero-3-phosphoethanolamine + H2O = a 1-acyl-sn-glycero-3-phosphoethanolamine + (5Z,8Z,11Z,14Z)-eicosatetraenoate + H(+). It carries out the reaction a 1,2-diacyl-sn-glycero-3-phospho-(1'-sn-glycerol) + H2O = 1-acyl-sn-glycero-3-phospho-(1'-sn-glycerol) + a fatty acid + H(+). It catalyses the reaction 1-hexadecanoyl-2-(9Z-octadecenoyl)-sn-glycero-3-phospho-(1'-sn-glycerol) + H2O = 1-hexadecanoyl-sn-glycero-3-phospho-(1'-sn-glycerol) + (9Z)-octadecenoate + H(+). The catalysed reaction is a 1,2-diacyl-sn-glycero-3-phospho-(1'-sn-glycerol) + H2O = 2-acyl-sn-glycero-3-phospho-(1'-sn-glycerol) + a fatty acid + H(+). The enzyme catalyses 1-hexadecanoyl-2-(9Z-octadecenoyl)-sn-glycero-3-phospho-(1'-sn-glycerol) + H2O = 2-(9Z-octadecenoyl)-sn-glycero-3-phospho-(1'-sn-glycerol) + hexadecanoate + H(+). With respect to regulation, phospholipase sn-2 versus sn-1 positional specificity is affected by the phospholipid composition of membranes. Phospholipase A2 activity toward 1-hexadecanoyl-2-(5Z,8Z,11Z,14Z-eicosatetraenoyl)-sn-glycero-3-phosphocholine (PAPE) is enhanced in the presence of 1,2-dioleoyl-sn-glycero-3-phosphocholine (DOPC), which promotes lipid bilayer formation. O-acyltransferase activity is inhibited by antiarrhythmic drug amiodarone. Functionally, has dual calcium-independent phospholipase and O-acyltransferase activities with a potential role in glycerophospholipid homeostasis and remodeling of acyl groups of lipophilic alcohols present in acidic cellular compartments. Catalyzes hydrolysis of the ester bond of the fatty acyl group attached at sn-1 or sn-2 position of phospholipids (phospholipase A1 or A2 activity) and transfer it to the hydroxyl group at the first carbon of lipophilic alcohols (O-acyltransferase activity). Among preferred fatty acyl donors are phosphatidylcholines, phosphatidylethanolamines, phosphatidylglycerols and phosphatidylserines. Favors sn-2 over sn-1 deacylation of unsaturated fatty acyl groups of phosphatidylcholines, phosphatidylethanolamines, and phosphatidylglycerols. Among preferred fatty acyl acceptors are natural lipophilic alcohols including short-chain ceramide N-acetyl-sphingosine (C2 ceramide), alkylacylglycerols, monoacylglycerols, and acylethanolamides such as anandamide and oleoylethanolamide. Selectively hydrolyzes the sn-1 fatty acyl group of truncated oxidized phospholipids and may play a role in detoxification of reactive oxidized phospholipids during oxidative stress. Required for normal phospholipid degradation in alveolar macrophages with potential implications in the clearance of pulmonary surfactant, which is mainly composed of dipalmitoylphosphatidylcholine (1,2-dihexadecanoyl-sn-glycero-3-phosphocholine). Involved in the first step of bis(monoacylglycero)phosphate (BMP) de novo synthesis from phosphatidylglycerol (1,2-diacyl-sn-glycero-3-phospho-(1'-sn-glycerol), PG). BMP is an important player in cargo sorting and degradation, regulation of cellular cholesterol levels and intercellular communication. At neutral pH, hydrolyzes the sn-1 fatty acyl group of the lysophosphatidylcholines. The chain is Lysosomal phospholipase A and acyltransferase from Mus musculus (Mouse).